The chain runs to 454 residues: tRNA modification GTPase MnmE (454 aa).

3 residues coordinate (6S)-5-formyl-5,6,7,8-tetrahydrofolate: arginine 23, glutamate 80, and lysine 120. Positions 216 to 377 constitute a TrmE-type G domain; the sequence is GMKVVIAGRP…LRNHLKQSMG (162 aa). Position 226 (asparagine 226) interacts with K(+). GTP-binding positions include 226–231, 245–251, 270–273, 335–338, and 358–360; these read NAGKSS, TDIAGTT, DTAG, NKAD, and SAR. Serine 230 is a binding site for Mg(2+). Residues threonine 245, isoleucine 247, and threonine 250 each coordinate K(+). Threonine 251 contacts Mg(2+). Lysine 454 serves as a coordination point for (6S)-5-formyl-5,6,7,8-tetrahydrofolate.

Belongs to the TRAFAC class TrmE-Era-EngA-EngB-Septin-like GTPase superfamily. TrmE GTPase family. In terms of assembly, homodimer. Heterotetramer of two MnmE and two MnmG subunits. K(+) serves as cofactor.

Its subcellular location is the cytoplasm. Its function is as follows. Exhibits a very high intrinsic GTPase hydrolysis rate. Involved in the addition of a carboxymethylaminomethyl (cmnm) group at the wobble position (U34) of certain tRNAs, forming tRNA-cmnm(5)s(2)U34. This chain is tRNA modification GTPase MnmE, found in Citrobacter koseri (strain ATCC BAA-895 / CDC 4225-83 / SGSC4696).